The sequence spans 30 residues: Fimbrial assembly protein, serogroup B1 (30 aa).

The sequence is that of Fimbrial assembly protein, serogroup B1 (fimB) from Dichelobacter nodosus (Bacteroides nodosus).